Reading from the N-terminus, the 311-residue chain is 4-hydroxyproline 2-epimerase (311 aa).

C89 (proton acceptor) is an active-site residue. Substrate contacts are provided by residues 90–91 (GH), H209, and D233. Catalysis depends on C237, which acts as the Proton donor. Position 238–239 (238–239 (GT)) interacts with substrate.

Belongs to the proline racemase family.

The catalysed reaction is trans-4-hydroxy-L-proline = cis-4-hydroxy-D-proline. Functionally, catalyzes the epimerization of trans-4-hydroxy-L-proline (t4LHyp) to cis-4-hydroxy-D-proline (c4DHyp). Is likely involved in a degradation pathway that converts t4LHyp to alpha-ketoglutarate. Displays no proline racemase activity. This is 4-hydroxyproline 2-epimerase from Burkholderia ambifaria (strain ATCC BAA-244 / DSM 16087 / CCUG 44356 / LMG 19182 / AMMD) (Burkholderia cepacia (strain AMMD)).